The primary structure comprises 554 residues: Myo-inositol transporter 1 (554 aa).

The span at 1 to 13 (MGSSTNNTQSKAT) shows a compositional bias: polar residues. The interval 1-57 (MGSSTNNTQSKATPSVLENEVNSSKSSVVSSTSSAKGLLRETTNHGTMETSSVQISE) is disordered. N-linked (GlcNAc...) asparagine glycosylation is found at asparagine 6 and asparagine 22. The span at 15–34 (SVLENEVNSSKSSVVSSTSS) shows a compositional bias: low complexity. Residues 44 to 57 (NHGTMETSSVQISE) are compositionally biased toward polar residues. Helical transmembrane passes span 65-85 (MVLV…YDTG), 110-130 (FITS…GVLA), 144-164 (IIFV…TMIA), 167-187 (FVLG…ISEL), 196-216 (LIVT…FINW), and 227-247 (VSVG…WFLP). Asparagine 279 carries N-linked (GlcNAc...) asparagine glycosylation. A helical transmembrane segment spans residues 313-332 (GNFRALILACGLQGIQQFTG). Residue asparagine 351 is glycosylated (N-linked (GlcNAc...) asparagine). Transmembrane regions (helical) follow at residues 354–374 (AVSI…ICII), 382–402 (ILLV…VAFH), 420–440 (GWGI…AIGI), 459–479 (IGAM…ASTF), and 490–510 (GTFS…YFLL).

Belongs to the major facilitator superfamily. Sugar transporter (TC 2.A.1.1) family.

It localises to the cell membrane. The catalysed reaction is myo-inositol(out) + H(+)(out) = myo-inositol(in) + H(+)(in). Functionally, major transporter for myo-inositol. The sequence is that of Myo-inositol transporter 1 from Candida albicans (strain SC5314 / ATCC MYA-2876) (Yeast).